Reading from the N-terminus, the 374-residue chain is UDP-N-acetylglucosamine--N-acetylmuramyl-(pentapeptide) pyrophosphoryl-undecaprenol N-acetylglucosamine transferase (374 aa).

UDP-N-acetyl-alpha-D-glucosamine is bound by residues 35–37, Asn-144, Arg-185, Ser-211, and Gln-305; that span reads TGG.

It belongs to the glycosyltransferase 28 family. MurG subfamily.

It localises to the cell inner membrane. It catalyses the reaction di-trans,octa-cis-undecaprenyl diphospho-N-acetyl-alpha-D-muramoyl-L-alanyl-D-glutamyl-meso-2,6-diaminopimeloyl-D-alanyl-D-alanine + UDP-N-acetyl-alpha-D-glucosamine = di-trans,octa-cis-undecaprenyl diphospho-[N-acetyl-alpha-D-glucosaminyl-(1-&gt;4)]-N-acetyl-alpha-D-muramoyl-L-alanyl-D-glutamyl-meso-2,6-diaminopimeloyl-D-alanyl-D-alanine + UDP + H(+). It participates in cell wall biogenesis; peptidoglycan biosynthesis. Cell wall formation. Catalyzes the transfer of a GlcNAc subunit on undecaprenyl-pyrophosphoryl-MurNAc-pentapeptide (lipid intermediate I) to form undecaprenyl-pyrophosphoryl-MurNAc-(pentapeptide)GlcNAc (lipid intermediate II). This Trichodesmium erythraeum (strain IMS101) protein is UDP-N-acetylglucosamine--N-acetylmuramyl-(pentapeptide) pyrophosphoryl-undecaprenol N-acetylglucosamine transferase.